The sequence spans 379 residues: Cystathionine gamma-lyase (379 aa).

The residue at position 195 (K195) is an N6-(pyridoxal phosphate)lysine.

Belongs to the trans-sulfuration enzymes family. It depends on pyridoxal 5'-phosphate as a cofactor.

The catalysed reaction is L,L-cystathionine + H2O = 2-oxobutanoate + L-cysteine + NH4(+). It carries out the reaction L-homocysteine + H2O = 2-oxobutanoate + hydrogen sulfide + NH4(+) + H(+). Catalyzes the conversion of cystathionine to cysteine, and homocysteine to sulfide. In Bacillus subtilis (strain 168), this protein is Cystathionine gamma-lyase (mccB).